A 339-amino-acid chain; its full sequence is D-alanine--D-alanine ligase (339 aa).

The ATP-grasp domain occupies lysine 126 to glutamate 333. Alanine 158–glutamate 213 contacts ATP. Residues aspartate 286, glutamate 300, and asparagine 302 each coordinate Mg(2+).

The protein belongs to the D-alanine--D-alanine ligase family. Mg(2+) serves as cofactor. The cofactor is Mn(2+).

The protein resides in the cytoplasm. The catalysed reaction is 2 D-alanine + ATP = D-alanyl-D-alanine + ADP + phosphate + H(+). The protein operates within cell wall biogenesis; peptidoglycan biosynthesis. Functionally, cell wall formation. This Deinococcus radiodurans (strain ATCC 13939 / DSM 20539 / JCM 16871 / CCUG 27074 / LMG 4051 / NBRC 15346 / NCIMB 9279 / VKM B-1422 / R1) protein is D-alanine--D-alanine ligase.